The sequence spans 314 residues: tRNA dimethylallyltransferase (314 aa).

9 to 16 (GPTAVGKT) serves as a coordination point for ATP. 11 to 16 (TAVGKT) contacts substrate. The tract at residues 34–37 (DSMQ) is interaction with substrate tRNA.

Belongs to the IPP transferase family. In terms of assembly, monomer. Requires Mg(2+) as cofactor.

The enzyme catalyses adenosine(37) in tRNA + dimethylallyl diphosphate = N(6)-dimethylallyladenosine(37) in tRNA + diphosphate. Catalyzes the transfer of a dimethylallyl group onto the adenine at position 37 in tRNAs that read codons beginning with uridine, leading to the formation of N6-(dimethylallyl)adenosine (i(6)A). The protein is tRNA dimethylallyltransferase of Clostridium tetani (strain Massachusetts / E88).